The following is a 185-amino-acid chain: Ribosome-recycling factor (185 aa).

The protein belongs to the RRF family.

It localises to the cytoplasm. Its function is as follows. Responsible for the release of ribosomes from messenger RNA at the termination of protein biosynthesis. May increase the efficiency of translation by recycling ribosomes from one round of translation to another. The polypeptide is Ribosome-recycling factor (Pseudomonas aeruginosa (strain LESB58)).